The following is a 1425-amino-acid chain: MENYFQAEAYNLDKVLDEFEQNEDETVSSTLLDTKWNKILDPPSHRLSFNPTLASVNESAVSNESQPQLKVFSLAHSAPLTTEEEDHCANGQDCNLNPEIATMWIDENAVAEDQLIKRNYSWDDQCSAVEVGEKKCGNLACLPDEKNVLVVAVMHNCDKRTLQNDLQDCNNYNSQSLMDAFSCSLDNENRQTDQFSFSINESTEKDMNSEKQMDPLNRPKTEGRSVNHLCPTSSDSLASVCSPSQLKDDGSIGRDPSMSAITSLTVDSVISSQGTDGCPAVKKQENYIPDEDLTGKISSPRTDLGSPNSFSHMSEGILMKKEPAEESTTEESLRSGLPLLLKPDMPNGSGRNNDCERCSDCLVPNEVRADENEGYEHEETLGTTEFLNMTEHFSESQDMTNWKLTKLNEMNDSQVNEEKEKFLQISQPEDTNGDSGGQCVGLADAGLDLKGTCISESEECDFSTVIDTPAANYLSNGCDSYGMQDPGVSFVPKTLPSKEDSVTEEKEIEESKSECYSNIYEQRGNEATEGSGLLLNSTGDLMKKNYLHNFCSQVPSVLGQSSPKVVASLPSISVPFGGARPKQPSNLKLQIPKPLSDHLQNDFPANSGNNTKNKNDILGKAKLGENSATNVCSPSLGNISNVDTNGEHLESYEAEISTRPCLALAPDSPDNDLRAGQFGISARKPFTTLGEVAPVWVPDSQAPNCMKCEARFTFTKRRHHCRACGKVFCASCCSLKCKLLYMDRKEARVCVICHSVLMNAQAWENMMSASSQSPNPNNPAEYCSTIPPLQQAQASGALSSPPPTVMVPVGVLKHPGAEVAQPREQRRVWFADGILPNGEVADAAKLTMNGTSSAGTLAVSHDPVKPVTTSPLPAETDICLFSGSITQVGSPVGSAMNLIPEDGLPPILISTGVKGDYAVEEKPSQISVMQQLEDGGPDPLVFVLNANLLSMVKIVNYVNRKCWCFTTKGMHAVGQSEIVILLQCLPDEKCLPKDIFNHFVQLYRDALAGNVVSNLGHSFFSQSFLGSKEHGGFLYVTSTYQSLQDLVLPTPPYLFGILIQKWETPWAKVFPIRLMLRLGAEYRLYPCPLFSVRFRKPLFGETGHTIMNLLADFRNYQYTLPVVQGLVVDMEVRKTSIKIPSNRYNEMMKAMNKSNEHVLAGGACFNEKADSHLVCVQNDDGNYQTQAISIHNQPRKVTGASFFVFSGALKSSSGYLAKSSIVEDGVMVQITAENMDSLRQALREMKDFTITCGKADAEEPQEHIHIQWVDDDKNVSKGVVSPIDGKSMETITNVKIFHGSEYKANGKVIRWTEVFFLENDDQHNCLSDPADHSRLTEHVAKAFCLALCPHLKLLKEDGMTKLGLRVTLDSDQVGYQAGSNGQPLPSQYMNDLDSALVPVIHGGACQLSEGPVVMELIFYILENIV.

Disordered regions lie at residues 201-255 and 291-352; these read ESTE…IGRD and EDLT…SGRN. Residues 202-225 are compositionally biased toward basic and acidic residues; that stretch reads STEKDMNSEKQMDPLNRPKTEGRS. Composition is skewed to polar residues over residues 230 to 245 and 296 to 312; these read CPTS…SPSQ and KISS…SFSH. A phosphoserine mark is found at Ser-306 and Ser-668. The FYVE-type zinc-finger motif lies at 699-758; the sequence is DSQAPNCMKCEARFTFTKRRHHCRACGKVFCASCCSLKCKLLYMDRKEARVCVICHSVLM. Zn(2+)-binding residues include Cys-705, Cys-708, Cys-721, Cys-724, Cys-729, Cys-732, Cys-750, and Cys-753. Positions 767 to 823 are SBD; the sequence is MSASSQSPNPNNPAEYCSTIPPLQQAQASGALSSPPPTVMVPVGVLKHPGAEVAQPR.

As to quaternary structure, interacts (via the SBD region) with SMAD2; the interaction recruits SMAD2 to the TGF-beta receptor and is disrupted by phosphorylation of SMAD2 upon TGF-beta receptor activation. Interacts with SMAD3. Interacts with TGFBR1 and TGFBR2; the interaction recruits SMAD2 to the TGF-beta receptor. Interacts with PML. Ubiquitous. In the brain found primarily in the cerebrovascular smooth muscle cells and reactive astrocytes.

It localises to the cytoplasm. The protein resides in the early endosome membrane. In terms of biological role, early endosomal protein that functions to recruit SMAD2/SMAD3 to intracellular membranes and to the TGF-beta receptor. Plays a significant role in TGF-mediated signaling by regulating the subcellular location of SMAD2 and SMAD3 and modulating the transcriptional activity of the SMAD3/SMAD4 complex. Possibly associated with TGF-beta receptor internalization. This chain is Zinc finger FYVE domain-containing protein 9 (ZFYVE9), found in Homo sapiens (Human).